A 99-amino-acid chain; its full sequence is MPKKKLIGEVVSDKMDKTVVVAVSTLVKHPRVGKYIKRTKKYYAHDENNECRDGDIVEIIESRPLSKLKRWRVLRIVERSVFADETLDEELEGGSSDDN.

It belongs to the universal ribosomal protein uS17 family. Part of the 30S ribosomal subunit.

One of the primary rRNA binding proteins, it binds specifically to the 5'-end of 16S ribosomal RNA. In Thermosipho africanus (strain TCF52B), this protein is Small ribosomal subunit protein uS17.